Reading from the N-terminus, the 126-residue chain is Histone H2B 1.2 (126 aa).

Residues 1–12 are compositionally biased toward low complexity; that stretch reads MPEPAKSAPAPK. A disordered region spans residues 1 to 35; it reads MPEPAKSAPAPKKGSKKAVTKTPKKDGKKRRKSRK. An N6-acetyllysine mark is found at Lys-6 and Lys-13. Residue Ser-15 is modified to Phosphoserine. Lys-16 and Lys-21 each carry N6-acetyllysine. A glycan (O-linked (GlcNAc) serine) is linked at Ser-113. Lys-121 is covalently cross-linked (Glycyl lysine isopeptide (Lys-Gly) (interchain with G-Cter in ubiquitin)).

This sequence belongs to the histone H2B family. The nucleosome is a histone octamer containing two molecules each of H2A, H2B, H3 and H4 assembled in one H3-H4 heterotetramer and two H2A-H2B heterodimers. The octamer wraps approximately 147 bp of DNA. Post-translationally, monoubiquitination of Lys-121 by BRE1 gives a specific tag for epigenetic transcriptional activation and is also prerequisite for histone H3 'Lys-4' and 'Lys-79' methylation. Phosphorylated on Ser-15 during developmentally programmed apoptosis; which may facilitate apoptotic chromatin condensation. In terms of processing, glcNAcylation at Ser-113 promotes monoubiquitination of Lys-121. It fluctuates in response to extracellular glucose, and associates with transcribed genes.

It is found in the nucleus. It localises to the chromosome. Core component of nucleosome. Nucleosomes wrap and compact DNA into chromatin, limiting DNA accessibility to the cellular machineries which require DNA as a template. Histones thereby play a central role in transcription regulation, DNA repair, DNA replication and chromosomal stability. DNA accessibility is regulated via a complex set of post-translational modifications of histones, also called histone code, and nucleosome remodeling. The polypeptide is Histone H2B 1.2 (Xenopus laevis (African clawed frog)).